The following is a 392-amino-acid chain: Sulfate adenylyltransferase (392 aa).

Belongs to the sulfate adenylyltransferase family.

It carries out the reaction sulfate + ATP + H(+) = adenosine 5'-phosphosulfate + diphosphate. The protein operates within sulfur metabolism; hydrogen sulfide biosynthesis; sulfite from sulfate: step 1/3. The sequence is that of Sulfate adenylyltransferase from Nostoc punctiforme (strain ATCC 29133 / PCC 73102).